Reading from the N-terminus, the 340-residue chain is DNA-directed RNA polymerase subunit alpha (340 aa).

Residues 1-236 (MLSLSKNWNT…EQLQLFISFE (236 aa)) form an alpha N-terminal domain (alpha-NTD) region. The segment at 246–340 (TDALPFSPYL…LSNRYEDSYN (95 aa)) is alpha C-terminal domain (alpha-CTD).

It belongs to the RNA polymerase alpha chain family. Homodimer. The RNAP catalytic core consists of 2 alpha, 1 beta, 1 beta' and 1 omega subunit. When a sigma factor is associated with the core the holoenzyme is formed, which can initiate transcription.

The catalysed reaction is RNA(n) + a ribonucleoside 5'-triphosphate = RNA(n+1) + diphosphate. Its function is as follows. DNA-dependent RNA polymerase catalyzes the transcription of DNA into RNA using the four ribonucleoside triphosphates as substrates. This is DNA-directed RNA polymerase subunit alpha from Rickettsia felis (strain ATCC VR-1525 / URRWXCal2) (Rickettsia azadi).